We begin with the raw amino-acid sequence, 229 residues long: Large ribosomal subunit protein uL1 (229 aa).

The protein belongs to the universal ribosomal protein uL1 family. In terms of assembly, part of the 50S ribosomal subunit.

Functionally, binds directly to 23S rRNA. The L1 stalk is quite mobile in the ribosome, and is involved in E site tRNA release. Protein L1 is also a translational repressor protein, it controls the translation of the L11 operon by binding to its mRNA. The chain is Large ribosomal subunit protein uL1 from Clostridium botulinum (strain 657 / Type Ba4).